The chain runs to 337 residues: Protein EXORDIUM-like 3 (337 aa).

A signal peptide spans 1–25 (MHSLPVNLVLTVLTVFLTSPAQVIG). 3 N-linked (GlcNAc...) asparagine glycosylation sites follow: Asn-34, Asn-66, and Asn-119.

The protein belongs to the EXORDIUM family.

It is found in the secreted. It localises to the extracellular space. Its subcellular location is the apoplast. Its function is as follows. May play a role in a brassinosteroid-dependent regulation of growth and development. The sequence is that of Protein EXORDIUM-like 3 (EXL3) from Arabidopsis thaliana (Mouse-ear cress).